The sequence spans 481 residues: Long chain base biosynthesis protein 1b (481 aa).

The helical transmembrane segment at 32–52 threads the bilayer; that stretch reads FGIHIDGHLVVEGLLIAAILF.

It belongs to the class-II pyridoxal-phosphate-dependent aminotransferase family. Heterodimer with LCB2. Component of the serine palmitoyltransferase (SPT) complex, composed of LCB1 and LCB2. It depends on pyridoxal 5'-phosphate as a cofactor.

The protein resides in the endoplasmic reticulum membrane. The enzyme catalyses L-serine + hexadecanoyl-CoA + H(+) = 3-oxosphinganine + CO2 + CoA. It participates in lipid metabolism; sphingolipid metabolism. Serine palmitoyltransferase (SPT). The heterodimer formed with LCB2 constitutes the catalytic core. This is Long chain base biosynthesis protein 1b from Oryza sativa subsp. japonica (Rice).